Here is a 282-residue protein sequence, read N- to C-terminus: MSSYANHQALAGLTLGKSTDYRDTYDASLLQGVPRSLNRDPLGLKADNLPFHGTDIWTLYELSWLNAKGLPQVAVGHVELDYTSANLIESKSFKLYLNSFNQTRFNNWDEVRQTLERDLSTCAQGKVSVALYRLDELEGQPIGHFNGTCIDDQDITIDNYEFTTDYLENATSGEKVVEETLVSHLLKSNCLITHQPDWGSIQIQYRGRQIDREKLLRYLVSFRHHNEFHEQCVERIFNDLLRFCQPEKLSVYARYTRRGGLDINPWRSNSDFVPSTTRLVRQ.

Ile-88–Ser-90 contacts substrate. NADPH is bound at residue Ser-90 to Lys-91. The Thioimide intermediate role is filled by Cys-190. Asp-197 acts as the Proton donor in catalysis. Substrate is bound at residue His-229–Glu-230. Arg-258 to Gly-259 is an NADPH binding site.

This sequence belongs to the GTP cyclohydrolase I family. QueF type 2 subfamily. Homodimer.

It is found in the cytoplasm. It carries out the reaction 7-aminomethyl-7-carbaguanine + 2 NADP(+) = 7-cyano-7-deazaguanine + 2 NADPH + 3 H(+). The protein operates within tRNA modification; tRNA-queuosine biosynthesis. Catalyzes the NADPH-dependent reduction of 7-cyano-7-deazaguanine (preQ0) to 7-aminomethyl-7-deazaguanine (preQ1). The protein is NADPH-dependent 7-cyano-7-deazaguanine reductase of Escherichia coli (strain SMS-3-5 / SECEC).